The chain runs to 1216 residues: Metabotropic glycine receptor (1216 aa).

The N-terminal stretch at 1–23 (MGVMAYPFLFCLLLVHFGLGAIG) is a signal peptide. Topologically, residues 24–417 (ASREAPSRPD…CFVQEDKYLR (394 aa)) are extracellular. The segment at 25–65 (SREAPSRPDPPRERTLRAKQHAQQPARASASDPSAPWSRST) is disordered. Basic and acidic residues predominate over residues 28-40 (APSRPDPPRERTL). The span at 46–64 (AQQPARASASDPSAPWSRS) shows a compositional bias: low complexity. The interval 85–281 (YLYTGDSHKL…CENGSYKPGW (197 aa)) is cache-like region. N-linked (GlcNAc...) asparagine glycosylation is found at asparagine 98 and asparagine 143. Cysteine 99 and cysteine 272 form a disulfide bridge. Residues serine 172 and arginine 173 each coordinate glycine. N-linked (GlcNAc...) asparagine glycosylation occurs at asparagine 215. Glutamate 271 serves as a coordination point for glycine. Asparagine 274 carries N-linked (GlcNAc...) asparagine glycosylation. Glycine is bound at residue aspartate 307. Asparagine 333 carries an N-linked (GlcNAc...) asparagine glycan. The chain crosses the membrane as a helical span at residues 418–439 (LAIISFQALCMLLDFLSMLVVY). The Cytoplasmic segment spans residues 440–451 (RFRKAKSIRASG). The chain crosses the membrane as a helical span at residues 452–474 (LILLETILFGSLLLYFPVVILYF). The Extracellular segment spans residues 475–478 (EPST). A helical membrane pass occupies residues 479–501 (FRCILLRWVRLLGFATVYGTVTL). A disulfide bridge links cysteine 481 with cysteine 573. The Cytoplasmic segment spans residues 502-525 (KLHRVLKVFLSRTAQRIPYMTGGR). Residues 526–547 (VMRMLAVILLVVFWFLVGWTSS) traverse the membrane as a helical segment. At 548–576 (VCQNLERHISLIGQGRTSDHLIFSMCLVE) the chain is on the extracellular side. A helical membrane pass occupies residues 577 to 597 (RWDYMTAAAEFLFLLWGVYLC). Residues 598–611 (YAVRTVPSAFHEPR) lie on the Cytoplasmic side of the membrane. A helical transmembrane segment spans residues 612–633 (YMAVAVHNELIISAIFHTIRFV). The Extracellular portion of the chain corresponds to 634–642 (LASRLQSDW). A helical transmembrane segment spans residues 643–664 (MLMLYFAHTHLTVTVTIGLLLI). At 665-1216 (PKFSHSSNNP…NEEVRLARKV (552 aa)) the chain is on the cytoplasmic side. Serine 694, serine 705, and serine 708 each carry phosphoserine. Disordered stretches follow at residues 757–875 (RITE…ESVP) and 911–1000 (KEKT…HMKD). Basic and acidic residues predominate over residues 769–781 (CSKEDKDGGEHGS). Lysine 774 is covalently cross-linked (Glycyl lysine isopeptide (Lys-Gly) (interchain with G-Cter in ubiquitin)). Residues 864–873 (EDSQAVSTES) show a composition bias toward polar residues. Serine 866 carries the post-translational modification Phosphoserine. Basic and acidic residues predominate over residues 926–944 (VEERAKAQKALPRERETNR). Composition is skewed to polar residues over residues 945-963 (KYSN…PNSS) and 980-991 (QRANPTTANSDL). Serine 947 is modified (phosphoserine). Residues 1007 to 1011 (VCPWE) carry the VCPWE motif 1 motif. The disordered stretch occupies residues 1038-1072 (ERNPTFSLKEKSHPKPKAADLCQQSNPKSVDKAEV). Serine 1066 is modified (phosphoserine). Residues 1072 to 1076 (VCPWE) carry the VCPWE motif 2 motif. The residue at position 1081 (serine 1081) is a Phosphoserine. The tract at residues 1128-1167 (SKVENENLNQLGEQEKKTSSSERNVPDSHNSSNNFQPPLM) is disordered. Positions 1140–1153 (EQEKKTSSSERNVP) are enriched in basic and acidic residues. Over residues 1154–1163 (DSHNSSNNFQ) the composition is skewed to polar residues. The short motif at 1172-1176 (VCPWE) is the VCPWE motif 3 element.

The protein belongs to the G-protein coupled receptor 3 family. As to quaternary structure, homodimer. Associates with the RGS7-GNB5 complex, promoting its localization to the cell membrane and regulating its GTPase activator activity. Interacts (via VCPWE motifs) with GNAO1. Interacts with GPC4. Interacts with EGFLAM.

The protein localises to the cell membrane. It is found in the postsynaptic cell membrane. It localises to the presynaptic cell membrane. The protein resides in the nucleus. Metabotropic receptor for glycine that controls synapse formation and function in the brain. Acts as an atypical G-protein coupled receptor that recruits and regulates the RGS7-GNB5 complex instead of activating G proteins. In absence of glycine ligand, promotes the GTPase activator activity of RGS7, increasing the GTPase activity of G protein alpha subunits, thereby driving them into their inactive GDP-bound form. Glycine-binding changes the conformation of the intracellular surface, inhibiting the GTPase activator activity of the RGS7-GNB5 complex, promoting G protein alpha subunits into their active GTP-bound form and regulating cAMP levels. Also able to bind taurine, a compound closely related to glycine, but with a two-fold lower affinity. Glycine receptor-dependent regulation of cAMP controls key ion channels, kinases and neurotrophic factors involved in neuronal excitability and synaptic transmission. Plays a pivotal role in regulating mood and cognition via its ability to regulate neuronal excitability in L2/L3 pyramidal neurons of the prefrontal cortex. Also involved in spatial learning by regulating hippocampal CA1 neuronal excitability. Acts as a synaptic organizer in the hippocampus, required for proper mossy fiber-CA3 neurocircuitry establishment, structure and function: induces presynaptic differentiation in contacting axons via its interaction with GPC4. In addition to glycine, may also act as a receptor for osteocalcin (BGLAP) hormone: osteocalcin-binding initiates a signaling response that prevents neuronal apoptosis in the hippocampus and regulates the synthesis of neurotransmitters. The chain is Metabotropic glycine receptor (GPR158) from Bos taurus (Bovine).